The sequence spans 572 residues: Glutamate--tRNA ligase (572 aa).

The 'HIGH' region motif lies at 107-117 (PNPDGAFHLGN).

Belongs to the class-I aminoacyl-tRNA synthetase family. Glutamate--tRNA ligase type 2 subfamily.

Its subcellular location is the cytoplasm. The enzyme catalyses tRNA(Glu) + L-glutamate + ATP = L-glutamyl-tRNA(Glu) + AMP + diphosphate. Its function is as follows. Catalyzes the attachment of glutamate to tRNA(Glu) in a two-step reaction: glutamate is first activated by ATP to form Glu-AMP and then transferred to the acceptor end of tRNA(Glu). The protein is Glutamate--tRNA ligase of Pyrococcus furiosus (strain ATCC 43587 / DSM 3638 / JCM 8422 / Vc1).